Here is a 297-residue protein sequence, read N- to C-terminus: Quinate/shikimate dehydrogenase (297 aa).

2 residues coordinate substrate: Lys-80 and Asp-116. Residues 141–144 (AGGA), 164–167 (NRRD), Lys-214, 241–244 (CVYN), and Gly-264 contribute to the NAD(+) site.

The protein belongs to the shikimate dehydrogenase family. As to quaternary structure, homodimer.

The catalysed reaction is L-quinate + NAD(+) = 3-dehydroquinate + NADH + H(+). It catalyses the reaction L-quinate + NADP(+) = 3-dehydroquinate + NADPH + H(+). The enzyme catalyses shikimate + NADP(+) = 3-dehydroshikimate + NADPH + H(+). It carries out the reaction shikimate + NAD(+) = 3-dehydroshikimate + NADH + H(+). It participates in metabolic intermediate biosynthesis; chorismate biosynthesis; chorismate from D-erythrose 4-phosphate and phosphoenolpyruvate: step 4/7. Functionally, the actual biological function of YdiB remains unclear, nor is it known whether 3-dehydroshikimate or quinate represents the natural substrate. Catalyzes the reversible NAD-dependent reduction of both 3-dehydroshikimate (DHSA) and 3-dehydroquinate to yield shikimate (SA) and quinate, respectively. It can use both NAD or NADP for catalysis, however it has higher catalytic efficiency with NAD. The chain is Quinate/shikimate dehydrogenase from Shigella dysenteriae serotype 1 (strain Sd197).